Reading from the N-terminus, the 580-residue chain is MRPLGALSLFALLATTVSGLAIREPDAKDWYQHATFYQIYPRSFLDSNGDGIGDLAGITSKMKYLADIGIDATWLSPPFKSPLKDFGYDVSDFYAIQPEYGNLTDFDKLVEEAHKNGIKLMLDFIPNHSSDQHEWFVKSVARDPEYSEFYVWKPPATGGGPPNNWISVFGGPAWTYNAARGEYYLHQFTPQQPDLNYRNPKLLAEMTKMLFFWLDRGVDGFRLDAINHMFEDEQFRDEPVSGWGQPGEYDSLDHIYTKDIPDVYNVVYNWRDQMDKYSAEKGRTIILMTEAYSSIEGTMLYYESADRKRQGAHMPFNFQLIYDFKKEQNAVGLKSSIDWWMNNMPARHTPSWVAGSHDHSRVASRVGLDRVDQVMTLMHTLPGTSITYYGEEVAMQDFKEAQQFDNRDPNRTPMQWDSSTSAGFSTNTNTWLRVHPDYARYNVDVMQKNPQSTFHHFQHLTKLRGHRTMQSGEYVHKTVGTKVYALLRELRGEDSFLTVLNMAGAEDTVDLGDFVNLPQKMRVEVAQPNSKSKAGNEVDISKLTLGPYDSVVLRATVSSAAAINLSIGLLLAIMARYIFV.

Residues 1–19 (MRPLGALSLFALLATTVSG) form the signal peptide. N-linked (GlcNAc...) asparagine glycans are attached at residues Asn102 and Asn127. The active-site Nucleophile is Asp224. Residue Glu290 is the Proton donor of the active site. N-linked (GlcNAc...) asparagine glycosylation occurs at Asn501. A helical membrane pass occupies residues 560–580 (AAAINLSIGLLLAIMARYIFV).

The protein belongs to the glycosyl hydrolase 13 family. (Microbial infection) Binds to L.sphaericus BinB subunit of the binary toxin BinAB. In terms of tissue distribution, in 4th-instar larvae produced in the brush border membranes of the gastric caeca and the posterior stomach cells (at protein level).

Its subcellular location is the membrane. The enzyme catalyses Hydrolysis of terminal, non-reducing (1-&gt;4)-linked alpha-D-glucose residues with release of alpha-D-glucose.. Probably an alpha-glucosidase, it has no alpha-amylase function. Its function is as follows. (Microbial infection) Serves as the larval receptor for Lysinibacillus sphaericus BinB toxin. The chain is Alpha-glucosidase from Culex pipiens (House mosquito).